A 597-amino-acid polypeptide reads, in one-letter code: Scarecrow-like protein 5 (597 aa).

The interval 111-172 (ESSSGTKSHP…SPLSGSSATN (62 aa)) is disordered. Positions 123–169 (NNKNNSSSTTSFSSNESPISQANNNNLSRFNNHSPEENNNSPLSGSS) are enriched in low complexity. In terms of domain architecture, GRAS spans 218-597 (SMEMISRGDL…QPLITSCAWR (380 aa)). Positions 225 to 285 (GDLKGVLYEC…VARLASSGSS (61 aa)) are leucine repeat I (LRI). Residues 304–369 (MHILYEACPY…GGPPNVRITG (66 aa)) are VHIID. The VHIID motif lies at 335–339 (VHIID). A leucine repeat II (LRII) region spans residues 385–417 (LVGQRLGKLAEMCGVPFEFHGAALCCTEVEIEK). The interval 426-520 (LAVNFPLVLH…QHCLAREVVN (95 aa)) is PFYRE. The tract at residues 523–597 (ACEGVEREER…QPLITSCAWR (75 aa)) is SAW.

Belongs to the GRAS family. In terms of tissue distribution, expressed in seedlings, roots, shoots, leaves, flowers and siliques.

The protein localises to the nucleus. In terms of biological role, probable transcription factor involved in plant development. This Arabidopsis thaliana (Mouse-ear cress) protein is Scarecrow-like protein 5 (SCL5).